A 387-amino-acid polypeptide reads, in one-letter code: Pepsin II-2/3 (387 aa).

The signal sequence occupies residues 1–15 (MKWLLLLGLLALSEC). Residues 16–59 (IVHKVPLVRKKSLRKNLIEKGLLQDYLKTHTPNPATKYFPKETF) constitute a propeptide, activation peptide. The 310-residue stretch at 75–384 (YFGTISIGTP…DRANNQLGLA (310 aa)) folds into the Peptidase A1 domain. Asp93 is an active-site residue. Cys106 and Cys111 are oxidised to a cystine. Ser129 is modified (phosphoserine). A disulfide bridge links Cys267 with Cys271. Residue Asp276 is part of the active site. Cysteines 310 and 343 form a disulfide.

This sequence belongs to the peptidase A1 family.

The protein localises to the secreted. The catalysed reaction is Preferential cleavage: hydrophobic, preferably aromatic, residues in P1 and P1' positions. Cleaves 1-Phe-|-Val-2, 4-Gln-|-His-5, 13-Glu-|-Ala-14, 14-Ala-|-Leu-15, 15-Leu-|-Tyr-16, 16-Tyr-|-Leu-17, 23-Gly-|-Phe-24, 24-Phe-|-Phe-25 and 25-Phe-|-Tyr-26 bonds in the B chain of insulin.. Its function is as follows. Shows particularly broad specificity; although bonds involving phenylalanine and leucine are preferred, many others are also cleaved to some extent. This is Pepsin II-2/3 from Oryctolagus cuniculus (Rabbit).